Here is an 81-residue protein sequence, read N- to C-terminus: Photosystem I iron-sulfur center (81 aa).

2 4Fe-4S ferredoxin-type domains span residues 2-31 (AHSVKVYDTCIGCTQCVRACPCDVLEMVPW) and 39-68 (IASAPRTEDCIGCKRCETACPTDFLSVRVY). The [4Fe-4S] cluster site is built by C11, C14, C17, C21, C48, C51, C54, and C58.

In terms of assembly, the eukaryotic PSI reaction center is composed of at least 11 subunits. [4Fe-4S] cluster is required as a cofactor.

It is found in the plastid. Its subcellular location is the chloroplast thylakoid membrane. The catalysed reaction is reduced [plastocyanin] + hnu + oxidized [2Fe-2S]-[ferredoxin] = oxidized [plastocyanin] + reduced [2Fe-2S]-[ferredoxin]. Its function is as follows. Apoprotein for the two 4Fe-4S centers FA and FB of photosystem I (PSI); essential for photochemical activity. FB is the terminal electron acceptor of PSI, donating electrons to ferredoxin. The C-terminus interacts with PsaA/B/D and helps assemble the protein into the PSI complex. Required for binding of PsaD and PsaE to PSI. PSI is a plastocyanin/cytochrome c6-ferredoxin oxidoreductase, converting photonic excitation into a charge separation, which transfers an electron from the donor P700 chlorophyll pair to the spectroscopically characterized acceptors A0, A1, FX, FA and FB in turn. The polypeptide is Photosystem I iron-sulfur center (Pyropia yezoensis (Susabi-nori)).